The sequence spans 2636 residues: Ankyrin repeat and KH domain-containing protein CBG24701 (2636 aa).

11 ANK repeats span residues 252–281 (SRITPLMEAAASSSEMIVELLLDYGMDPNA), 286–317 (NCNTALIYAAATDDRDMVEVILEHEGPHKVDV), 361–390 (NDNSPLIFAAMKGFLDIATVILDYQDKNQQ), 435–464 (NLPSPMMLACAGGFPELVEILLAAGARIDE), 468–500 (HKNTCLIEACDGVSGDQVSVVRMLLNRHADVNA), 505–534 (SGDTPMSLAARHGNIAIMKMLYEKGADLTT), 536–564 (KITPIVEASIETHLECVQFILAHCKTIPQ), 566–595 (QLSRALFAAAEGGCLKIVEELVRAGADLNF), 598–627 (DERTAIMKAARFNHFDIVQYLVYKGASVNF), 632–661 (NDATALSLACTYGNMDIAQFLIRNGADPML), and 665–695 (DGVNCFMEAAKHGSFDLMKLLVEFTKGNMDL). Disordered regions lie at residues 994 to 1030 (PIDAHQSNPPPAQQTGPKTTSLTTPQPDESNGATTIE), 1172 to 1191 (KSNRDKGSQQLKAAEQKKGK), and 1230 to 1268 (NNTQVQQQQGQQQQGQLRRTHSEGDGTERAKARSNVIDK). Over residues 1006 to 1030 (QQTGPKTTSLTTPQPDESNGATTIE) the composition is skewed to polar residues. Positions 1233–1245 (QVQQQQGQQQQGQ) are enriched in low complexity. Positions 1249 to 1260 (THSEGDGTERAK) are enriched in basic and acidic residues. 10 ANK repeats span residues 1273 to 1302 (TLETPLSIACSNGHREVVELLLKEGANIEH), 1306 to 1335 (KGFTPLIIAATYGHAPIVEVLLKNHAAIEA), 1340 to 1369 (TKDTALSLACTAGRKDVVEMLLAHGANKEH), 1373 to 1402 (SDYTPLSLASSSGFLDIVNLLLTAGSEINS), 1408 to 1437 (LGISPLMLAAMNGHKETTKVLLEKGSDINA), 1447 to 1476 (YRNTALTLASFQGRFEVVKLLLCYNANVEH), 1480 to 1509 (TGLTPLMECASGGYVDVGNLLIENGADPNA), 1515 to 1546 (TKDTALTIAAEKGHEKFVQMLLDNDVIYDIRN), 1548 to 1577 (KGCSALWLACNGGHLGTAQALVFKGADTDM), and 1581 to 1610 (RKMSPMVAAFRKGHIEIIKFLVGHAKQFPN). A coiled-coil region spans residues 1638-1696 (RNAKKAQAETAEETANRLLQLIDDEKERDINKKQKIKDKKKQKKEAKKKFQAEQEQLSA). Positions 1669–1857 (KKQKIKDKKK…SSISERQHSW (189 aa)) are disordered. A compositionally biased stretch (basic residues) spans 1670 to 1686 (KQKIKDKKKQKKEAKKK). A compositionally biased stretch (pro residues) spans 1698–1708 (PSKPEPVVAPE). A compositionally biased stretch (acidic residues) spans 1709-1722 (PEPEPETEPVEEPA). Residues 1811-1829 (DWQKAGKEGKKVRPKREGR) show a composition bias toward basic and acidic residues. Residues 1832 to 1851 (APSSAGSSQAKHRSNTSSIS) are compositionally biased toward polar residues. The 66-residue stretch at 1864-1929 (VKAYEFTVPG…DVVSMAVNII (66 aa)) folds into the KH domain. Disordered stretches follow at residues 1980–2182 (SASI…SLPS), 2196–2221 (FKPTAPAPAPVTSIAPSTSTATSTAS), 2269–2292 (NSTASSLNTATTKNDTSDWGSNDF), 2301–2320 (SNQKTSSAPQQPVSSVNSQL), 2352–2417 (SQSS…TQQQ), 2444–2465 (MHRQENSSSVPGPSQPSANPYY), and 2539–2636 (GMMQ…SSRM). Polar residues predominate over residues 1994-2008 (SQCNRSSKSHGNQAT). A compositionally biased stretch (low complexity) spans 2025 to 2045 (TPPTQTQTKQQPTPSPQVQQP). Positions 2057 to 2083 (SLAQSSVPQATENVTKPTQTPPASVQQ) are enriched in polar residues. 2 stretches are compositionally biased toward low complexity: residues 2099-2119 (QVVQPVPPVHQHTPVPQQRPQ) and 2139-2148 (QQHMQQIQQQ). A compositionally biased stretch (pro residues) spans 2167-2179 (PGPPVQPQTPPQS). Residues 2269 to 2280 (NSTASSLNTATT) show a composition bias toward low complexity. Positions 2281–2292 (KNDTSDWGSNDF) are enriched in polar residues. Composition is skewed to low complexity over residues 2361 to 2373 (QHQQQQQRIMQDP) and 2391 to 2417 (PQQFQQPQFSSQSHPSQSSMMPSTQQQ). Polar residues-rich tracts occupy residues 2449–2465 (NSSSVPGPSQPSANPYY), 2565–2574 (RSASGSSQNR), and 2583–2595 (QQPQPFSQLTQAD). Low complexity predominate over residues 2599 to 2615 (RLLLQQQQQQRSSQQQQ). Polar residues predominate over residues 2616–2636 (NPTNQGLPQKWSNTWNSSSRM).

Belongs to the mask family.

The protein localises to the cytoplasm. In Caenorhabditis briggsae, this protein is Ankyrin repeat and KH domain-containing protein CBG24701.